Consider the following 357-residue polypeptide: (+)-eremophilene synthase (357 aa).

Positions 100 and 105 each coordinate Mg(2+). Residues 100-105 carry the DDXXE motif motif; that stretch reads DDDFDE. Substrate is bound at residue R198. Mg(2+) is bound by residues N244 and S248. Residue K251 participates in substrate binding. D252 is a Mg(2+) binding site. 331–332 is a substrate binding site; it reads RY.

Belongs to the terpene synthase family. It depends on Mg(2+) as a cofactor.

It carries out the reaction (2E,6E)-farnesyl diphosphate = (+)-eremophilene + diphosphate. It participates in secondary metabolite biosynthesis; terpenoid biosynthesis. Functionally, catalyzes the conversion of (2E,6E)-farnesyl diphosphate (FPP) to yield the bicyclic sesquiterpene eremophilene via a 1,10-cyclization, which requires the abstraction of the pyrophosphate from FPP to yield the (E,E)-germacradienyl cation. The only accepted substrate is farnesyl diphosphate (FPP). This chain is (+)-eremophilene synthase, found in Gibberella fujikuroi (strain CBS 195.34 / IMI 58289 / NRRL A-6831) (Bakanae and foot rot disease fungus).